A 234-amino-acid chain; its full sequence is Sugar fermentation stimulation protein A (234 aa).

The segment at residues 201-220 (LLSEAQNKGVEVLAYKAELS) is a DNA-binding region (H-T-H motif).

It belongs to the SfsA family.

Functionally, binds to DNA non-specifically. Could be a regulatory factor involved in maltose metabolism. In Salmonella dublin (strain CT_02021853), this protein is Sugar fermentation stimulation protein A.